The primary structure comprises 118 residues: Small ribosomal subunit protein eS24 (118 aa).

It belongs to the eukaryotic ribosomal protein eS24 family.

The chain is Small ribosomal subunit protein eS24 from Sulfolobus acidocaldarius (strain ATCC 33909 / DSM 639 / JCM 8929 / NBRC 15157 / NCIMB 11770).